A 364-amino-acid polypeptide reads, in one-letter code: MEGLLFNVNNGYIEGIVRGYRNSLLTSTNYTNMTQCESIDDLKLQLGPAYGDFLASLPPKPSTSALAAKTTDKLVSEFRYVRANAAGSLAKFMDYLTYGYMIDNVALLITGTLHERDTRELLERCHPLGWFETMPVLCVATNIEELYNSVMIETPLAPYFKSSLSLQDLDELNIEIVRNTLYKNYLEDFYHFVNTHPDMAGTPTAEVMSELLEFEADRRAINITLNSFGTELSKADRKKLYPNFGQLYPEGTLMLSRADDFEGVRLAVEGVADYKSFFDAAGLGGGPSGPGNMGGGGTEGKSLEDMFYQKEMEISKMAFTRQFTYAIVYAWVKLREQEIRNITWIAECIAQNQKERINNYISVF.

The protein belongs to the V-ATPase V0D/AC39 subunit family. As to quaternary structure, V-ATPase is a heteromultimeric enzyme composed of a peripheral catalytic V1 complex (components A to H) attached to an integral membrane V0 proton pore complex (components: a, c, c', c'', d, e, f and VOA1).

The protein localises to the vacuole membrane. In terms of biological role, subunit of the V0 complex of vacuolar(H+)-ATPase (V-ATPase), a multisubunit enzyme composed of a peripheral complex (V1) that hydrolyzes ATP and a membrane integral complex (V0) that translocates protons. V-ATPase is responsible for acidifying and maintaining the pH of intracellular compartments. This subunit is a non-integral membrane component of the membrane pore domain and is required for proper assembly of the V0 sector. Might be involved in the regulated assembly of V1 subunits onto the membrane sector or alternatively may prevent the passage of protons through V0 pores. The chain is V-type proton ATPase subunit d from Neurospora crassa (strain ATCC 24698 / 74-OR23-1A / CBS 708.71 / DSM 1257 / FGSC 987).